The sequence spans 20 residues: Dihydrolipoamide-residue succinyltransferase component of 2-oxoglutarate dehydrogenase complex (20 aa).

It belongs to the 2-oxoacid dehydrogenase family. In terms of assembly, forms a 24-polypeptide structural core with octahedral symmetry. The cofactor is (R)-lipoate.

The protein localises to the mitochondrion membrane. It catalyses the reaction N(6)-[(R)-dihydrolipoyl]-L-lysyl-[protein] + succinyl-CoA = N(6)-[(R)-S(8)-succinyldihydrolipoyl]-L-lysyl-[protein] + CoA. The protein operates within amino-acid degradation; L-lysine degradation via saccharopine pathway; glutaryl-CoA from L-lysine: step 6/6. In terms of biological role, the 2-oxoglutarate dehydrogenase complex catalyzes the overall conversion of 2-oxoglutarate to succinyl-CoA and CO(2). It contains multiple copies of three enzymatic components: 2-oxoglutarate dehydrogenase (E1), dihydrolipoamide succinyltransferase (E2) and lipoamide dehydrogenase (E3). The polypeptide is Dihydrolipoamide-residue succinyltransferase component of 2-oxoglutarate dehydrogenase complex (Solanum tuberosum (Potato)).